Reading from the N-terminus, the 237-residue chain is N-demethylindolmycin N-methyltransferase (237 aa).

Belongs to the methyltransferase superfamily.

It carries out the reaction N-demethylindolmycin + S-adenosyl-L-methionine = indolmycin + S-adenosyl-L-homocysteine + H(+). Its function is as follows. Involved in the biosynthesis of the antibiotic indolmycin, an inhibitor of the bacterial tryptophan-tRNA synthetases. Catalyzes the methylation of N-demethylindolmycin to yield indolmycin, with S-adenosylmethionine (AdoMet) acting as the methyl donor. This chain is N-demethylindolmycin N-methyltransferase, found in Streptomyces griseus.